We begin with the raw amino-acid sequence, 276 residues long: SF-assemblin (276 aa).

A nonhelical region region spans residues 1 to 31; sequence MSLRPFETPGGLSSLSPRRRDFSPTRPGTNG. A disordered region spans residues 1–37; sequence MSLRPFETPGGLSSLSPRRRDFSPTRPGTNGPSAKLE. The segment at 32–276 is rod; it reads PSAKLEHVTE…LQEGLKLVSA (245 aa). Residues 67 to 145 are a coiled coil; sequence LLQESLQRIE…LVRDERESRR (79 aa).

This sequence belongs to the SF-assemblin family.

The protein localises to the cytoplasm. It is found in the cytoskeleton. Its function is as follows. Major component of the striated microtubule-associated fibers (SMAFs; system-I-fibers). This Chlamydomonas reinhardtii (Chlamydomonas smithii) protein is SF-assemblin.